The following is an 841-amino-acid chain: Formin-like protein 10 (841 aa).

An N-terminal signal peptide occupies residues methionine 1–alanine 25. The chain crosses the membrane as a helical span at residues leucine 102–phenylalanine 122. 3 disordered regions span residues serine 137–leucine 166, isoleucine 254–arginine 297, and lysine 403–arginine 512. A compositionally biased stretch (polar residues) spans serine 139–leucine 152. The segment covering isoleucine 254–proline 278 has biased composition (low complexity). A compositionally biased stretch (polar residues) spans histidine 279–glutamate 293. Positions leucine 426–proline 444 are enriched in pro residues. Residues glutamate 469–alanine 841 enclose the FH2 domain. Over residues tyrosine 502–arginine 512 the composition is skewed to polar residues.

Belongs to the formin-like family. Class-I subfamily.

The protein resides in the membrane. Functionally, might be involved in the organization and polarity of the actin cytoskeleton. This chain is Formin-like protein 10 (FH10), found in Arabidopsis thaliana (Mouse-ear cress).